The primary structure comprises 65 residues: MKASELRAKDVAALEKEISDLLKAHFGLRMQKATQQLTNHSVIKQTRRDIARARTILTEKKKGAA.

The protein belongs to the universal ribosomal protein uL29 family.

The protein is Large ribosomal subunit protein uL29 of Leptothrix cholodnii (strain ATCC 51168 / LMG 8142 / SP-6) (Leptothrix discophora (strain SP-6)).